An 817-amino-acid chain; its full sequence is Protein EFR3 homolog B (817 aa).

Phosphoserine occurs at positions 212, 214, and 216.

This sequence belongs to the EFR3 family. In terms of assembly, component of a phosphatidylinositol 4-kinase (PI4K) complex, composed of PI4KA, EFR3 (EFR3A or EFR3B), TTC7 (TTC7A or TTC7B) and HYCC (HYCC1 or HYCC2). Palmitoylated at its N-terminus, anchoring the protein to the plasma membrane. As to expression, widely expressed.

The protein resides in the cell membrane. It is found in the cytoplasm. The protein localises to the cytosol. In terms of biological role, component of a complex required to localize phosphatidylinositol 4-kinase (PI4K) to the plasma membrane. The complex acts as a regulator of phosphatidylinositol 4-phosphate (PtdIns(4)P) synthesis. In the complex, EFR3B probably acts as the membrane-anchoring component. Also involved in responsiveness to G-protein-coupled receptors; it is however unclear whether this role is direct or indirect. In Mus musculus (Mouse), this protein is Protein EFR3 homolog B (Efr3b).